The following is a 382-amino-acid chain: MEARNAEGLESCIEKIQEVKLSSFAELKAFRERKVALITGITGQDGSYLAELLLSKGYKVHGIIRRSSSFNTARIEHLYGNPVTHNGSASFSLHYGDMTDSSCLIKLISTIEPTEIYHLAAQSHVKVSFDLPEYTAEVDAVGTLRLLDAIHACRLTEKVRFYQASTSELYGKVQEIPQSELTPFYPRSPYAVAKMYGYWIVVNYREAYKMFACNGILFNHESPRRGETFVTRKITRSVAKISLRQQEHIELGNLSALRDWGHAKEYVEAMWRILQQDTPDDFVIATGKQFSVREFCNLAFAEIGEQLVWEGEGVDEVGKNQDGVVRVKVSPKYYRPTEVETLLGNPAKARKTLGWEPKITVPELVKEMVASDIALMEADPMA.

Residues 40-45 (GITGQD), 97-98 (DM), 119-123 (LAAQS), and tyrosine 134 each bind NADP(+). Threonine 166 is an active-site residue. Residues glutamate 168 and tyrosine 190 each act as nucleophile in the active site. Residues lysine 194, histidine 220, and arginine 225 each contribute to the NADP(+) site.

This sequence belongs to the NAD(P)-dependent epimerase/dehydratase family. GDP-mannose 4,6-dehydratase subfamily. The cofactor is NADP(+).

The enzyme catalyses GDP-alpha-D-mannose = GDP-4-dehydro-alpha-D-rhamnose + H2O. The protein operates within nucleotide-sugar biosynthesis; GDP-L-fucose biosynthesis via de novo pathway; GDP-L-fucose from GDP-alpha-D-mannose: step 1/2. Functionally, catalyzes the conversion of GDP-D-mannose to GDP-4-dehydro-6-deoxy-D-mannose. The polypeptide is GDP-mannose 4,6 dehydratase 2 (gmd-2) (Caenorhabditis elegans).